A 545-amino-acid chain; its full sequence is Carboxylesterase 5A (545 aa).

Positions 1–28 (MSGMWVHPGRTLIWALWVLAAVIKGPAA) are cleaved as a signal peptide. N86 carries an N-linked (GlcNAc...) (complex) asparagine glycan. Cysteines 94 and 121 form a disulfide. N-linked (GlcNAc...) asparagine glycosylation occurs at N134. The active-site Acyl-ester intermediate is the S226. Residues C281 and C292 are joined by a disulfide bond. E346 serves as the catalytic Charge relay system. 2 N-linked (GlcNAc...) asparagine glycosylation sites follow: N363 and N443. The active-site Charge relay system is H454.

The protein belongs to the type-B carboxylesterase/lipase family. In terms of processing, N-glycosylated; contains a fucosylated complex carbohydrate. As to expression, present at high level in urine. Expressed in the kidney proximal straight tubular cells and is secreted from the apical compartment of the cells into the urine (at protein level). In mature cats, it is present at higher level in intact males than in castrated males or in intact or spayed females.

The protein resides in the secreted. It carries out the reaction a carboxylic ester + H2O = an alcohol + a carboxylate + H(+). Functionally, carboxylesterase present at high level in urine that regulates production of felinine, a probable pheromone precursor. Probably acts by hydrolyzing the peptide bond of the felinine precursor 3-methylbutanol cyteinylglycine, producing felinine and glycine in cat urine. The protein is Carboxylesterase 5A (CES5A) of Felis catus (Cat).